The primary structure comprises 65 residues: RKPCGKNEVWTECTGCELKCGQDEKTPCALMCRPPSCECTPGRGMRRTHDGKCVPVSECPRKMPK.

Intrachain disulfides connect Cys-4–Cys-37, Cys-13–Cys-32, Cys-16–Cys-28, Cys-20–Cys-59, and Cys-39–Cys-53. Positions 4–59 constitute a TIL domain; it reads CGKNEVWTECTGCELKCGQDEKTPCALMCRPPSCECTPGRGMRRTHDGKCVPVSEC.

Belongs to the serine protease inhibitor-like (TIL domain-containing) family.

It localises to the secreted. Its function is as follows. Defends the organism against the host's proteinases. The sequence is that of Chymotrypsin/elastase isoinhibitors 2 to 5 from Ascaris suum (Pig roundworm).